Reading from the N-terminus, the 178-residue chain is Putative metal-dependent hydrolase GK0616 (178 aa).

Histidine 68, histidine 161, and histidine 165 together coordinate Zn(2+).

Belongs to the metal hydrolase YfiT family. As to quaternary structure, homodimer. Requires Zn(2+) as cofactor.

It localises to the cytoplasm. Its function is as follows. Possible metal-dependent hydrolase. This Geobacillus kaustophilus (strain HTA426) protein is Putative metal-dependent hydrolase GK0616.